A 524-amino-acid chain; its full sequence is Nuclear distribution protein PAC1 (524 aa).

A coiled-coil region spans residues 65–90 (STVLRLQRKIIDLENEVGTLRSIVDG). WD repeat units lie at residues 121–160 (QQNQ…TSIP), 166–217 (AHTR…HIRT), 220–262 (GHDH…KSFT), 277–317 (NSQL…GLAL), 353–394 (IPQE…LIPH), 415–454 (GHQS…VTGS), 463–492 (GHDG…DATE), and 493–524 (EESH…KLWS).

This sequence belongs to the WD repeat LIS1/nudF family. In terms of assembly, self-associates. Interacts with NDL1 and dynein.

It localises to the cytoplasm. It is found in the cytoskeleton. Its subcellular location is the spindle pole. Positively regulates the activity of the minus-end directed microtubule motor protein dynein. Plays a central role in positioning the mitotic spindle at the bud neck during cell division. Targets cytoplasmic dynein to microtubule plus ends, thereby promoting dynein-mediated microtubule sliding along the bud cortex and consequently the movement of the mitotic spindle to the bud neck. The chain is Nuclear distribution protein PAC1 from Scheffersomyces stipitis (strain ATCC 58785 / CBS 6054 / NBRC 10063 / NRRL Y-11545) (Yeast).